A 295-amino-acid chain; its full sequence is Phosphoribosylaminoimidazole-succinocarboxamide synthase (295 aa).

It belongs to the SAICAR synthetase family.

The enzyme catalyses 5-amino-1-(5-phospho-D-ribosyl)imidazole-4-carboxylate + L-aspartate + ATP = (2S)-2-[5-amino-1-(5-phospho-beta-D-ribosyl)imidazole-4-carboxamido]succinate + ADP + phosphate + 2 H(+). It participates in purine metabolism; IMP biosynthesis via de novo pathway; 5-amino-1-(5-phospho-D-ribosyl)imidazole-4-carboxamide from 5-amino-1-(5-phospho-D-ribosyl)imidazole-4-carboxylate: step 1/2. This is Phosphoribosylaminoimidazole-succinocarboxamide synthase from Nitrosomonas europaea (strain ATCC 19718 / CIP 103999 / KCTC 2705 / NBRC 14298).